Consider the following 219-residue polypeptide: Protein-L-isoaspartate O-methyltransferase (219 aa).

Residue serine 67 is part of the active site.

Belongs to the methyltransferase superfamily. L-isoaspartyl/D-aspartyl protein methyltransferase family.

It localises to the cytoplasm. The enzyme catalyses [protein]-L-isoaspartate + S-adenosyl-L-methionine = [protein]-L-isoaspartate alpha-methyl ester + S-adenosyl-L-homocysteine. Catalyzes the methyl esterification of L-isoaspartyl residues in peptides and proteins that result from spontaneous decomposition of normal L-aspartyl and L-asparaginyl residues. It plays a role in the repair and/or degradation of damaged proteins. The sequence is that of Protein-L-isoaspartate O-methyltransferase from Cereibacter sphaeroides (strain ATCC 17029 / ATH 2.4.9) (Rhodobacter sphaeroides).